Here is a 141-residue protein sequence, read N- to C-terminus: Hemoglobin subunit alpha (141 aa).

Residues 1–141 (VLSPDDKKHV…VSTVLTSKYR (141 aa)) form the Globin domain. Ser3 bears the Phosphoserine mark. N6-succinyllysine is present on residues Lys7 and Lys11. N6-acetyllysine; alternate is present on Lys16. Position 16 is an N6-succinyllysine; alternate (Lys16). The residue at position 24 (Tyr24) is a Phosphotyrosine. Residue Ser35 is modified to Phosphoserine. Residue Lys40 is modified to N6-succinyllysine. Position 49 is a phosphoserine (Ser49). His58 is a binding site for O2. His87 lines the heme b pocket. A Phosphoserine modification is found at Ser102. Position 108 is a phosphothreonine (Thr108). Phosphoserine is present on residues Ser124 and Ser131. Residues Thr134 and Thr137 each carry the phosphothreonine modification. At Ser138 the chain carries Phosphoserine.

It belongs to the globin family. As to quaternary structure, heterotetramer of two alpha chains and two beta chains. In terms of tissue distribution, red blood cells.

Involved in oxygen transport from the lung to the various peripheral tissues. Functionally, hemopressin acts as an antagonist peptide of the cannabinoid receptor CNR1. Hemopressin-binding efficiently blocks cannabinoid receptor CNR1 and subsequent signaling. This is Hemoglobin subunit alpha (HBA) from Theropithecus gelada (Gelada baboon).